The primary structure comprises 462 residues: Chromosomal replication initiator protein DnaA (462 aa).

Residues 1–86 (MSLSLWQQCL…EVGNKPVSQN (86 aa)) form a domain I, interacts with DnaA modulators region. The interval 86–125 (NDSPPQRVVTHTPVAPAPQNTSVRPSWDNTAVQPELSYRS) is domain II. Residues 126–342 (NVNPKHTFDN…GALNRVIANA (217 aa)) are domain III, AAA+ region. ATP is bound by residues Gly-170, Gly-172, Lys-173, and Thr-174. The interval 343–462 (NFTGRAITID…FSNLIRTLSS (120 aa)) is domain IV, binds dsDNA.

It belongs to the DnaA family. As to quaternary structure, oligomerizes as a right-handed, spiral filament on DNA at oriC.

Its subcellular location is the cytoplasm. Functionally, plays an essential role in the initiation and regulation of chromosomal replication. ATP-DnaA binds to the origin of replication (oriC) to initiate formation of the DNA replication initiation complex once per cell cycle. Binds the DnaA box (a 9 base pair repeat at the origin) and separates the double-stranded (ds)DNA. Forms a right-handed helical filament on oriC DNA; dsDNA binds to the exterior of the filament while single-stranded (ss)DNA is stabiized in the filament's interior. The ATP-DnaA-oriC complex binds and stabilizes one strand of the AT-rich DNA unwinding element (DUE), permitting loading of DNA polymerase. After initiation quickly degrades to an ADP-DnaA complex that is not apt for DNA replication. Binds acidic phospholipids. This chain is Chromosomal replication initiator protein DnaA, found in Photorhabdus laumondii subsp. laumondii (strain DSM 15139 / CIP 105565 / TT01) (Photorhabdus luminescens subsp. laumondii).